Consider the following 337-residue polypeptide: Cysteine proteinase 3 (337 aa).

Positions 1–21 (MRLSITLIFTLIVLSISFISA) are cleaved as a signal peptide. Positions 22-120 (GNVFSHKQYQ…GLRLNRPQFK (99 aa)) are cleaved as a propeptide — activation peptide. Disulfide bonds link C142–C185, C176–C219, and C277–C326. The active site involves C145. Catalysis depends on residues H284 and N304.

It belongs to the peptidase C1 family.

The protein localises to the lysosome. The protein is Cysteine proteinase 3 (cprC) of Dictyostelium discoideum (Social amoeba).